A 268-amino-acid polypeptide reads, in one-letter code: Putative F-box protein At3g23420 (268 aa).

The F-box domain maps to 5–51 (PRDLSDLPRNMAEEVLSRVPMTSLRRLRFTCKKWNTLSRCRSFAKKH).

This Arabidopsis thaliana (Mouse-ear cress) protein is Putative F-box protein At3g23420.